A 301-amino-acid chain; its full sequence is MPAIASKQYSDDVSLLVLLLDTNPLFWSTTSITFSQFLSHVLAFLNAVLGLNQLNQVVVIATGYSSCDYIYDSSLTSNHGNFESNGTGMPAIFGSLLKKLEEFVTKDEELSKEEVSEDRIPSCLLSGSLSMALCYIQRVFRSGHLHPQPRILCLQGSPDGPEQYVAVMNSIFSAQRLMVPIDSCYIGVQNSAFLQQASYITGGVHHTPKQLDGLFQYLTTIFATDLHSRGFVQLPKPIGVDFRASCFCHKKTIDMGYICSVCLSIFCEHHKKCSTCGSVFGQSKLDDASSASDKKRKAPST.

The C4-type zinc finger occupies 259–276 (CSVCLSIFCEHHKKCSTC).

This sequence belongs to the TFB4 family. In terms of assembly, component of the 7-subunit TFIIH core complex composed of XPB, XPD, TFB1/GTF2H1, GTF2H2/P44, TFB4/GTF2H3, TFB2/GTF2H4 and TFB5/GTF2H5, which is active in NER. The core complex associates with the 3-subunit CDK-activating kinase (CAK) module composed of CYCH1/cyclin H1, CDKD and MAT1/At4g30820 to form the 10-subunit holoenzyme (holo-TFIIH) active in transcription.

It localises to the nucleus. Its function is as follows. Component of the general transcription and DNA repair factor IIH (TFIIH) core complex, which is involved in general and transcription-coupled nucleotide excision repair (NER) of damaged DNA and, when complexed to CAK, in RNA transcription by RNA polymerase II. In NER, TFIIH acts by opening DNA around the lesion to allow the excision of the damaged oligonucleotide and its replacement by a new DNA fragment. In transcription, TFIIH has an essential role in transcription initiation. When the pre-initiation complex (PIC) has been established, TFIIH is required for promoter opening and promoter escape. Phosphorylation of the C-terminal tail (CTD) of the largest subunit of RNA polymerase II by the kinase module CAK controls the initiation of transcription. The sequence is that of General transcription and DNA repair factor IIH subunit TFB4 from Arabidopsis thaliana (Mouse-ear cress).